Here is a 323-residue protein sequence, read N- to C-terminus: UDP-N-acetylenolpyruvoylglucosamine reductase (323 aa).

Residues 52 to 217 enclose the FAD-binding PCMH-type domain; the sequence is KSGGAADWLF…VSARLQGEPG (166 aa). R197 is a catalytic residue. The tract at residues 234–253 is disordered; sequence EQSQPVRTKTGGSTFKNPPG. Polar residues predominate over residues 235-249; sequence QSQPVRTKTGGSTFK. S246 serves as the catalytic Proton donor. The active site involves E316.

It belongs to the MurB family. It depends on FAD as a cofactor.

It is found in the cytoplasm. The enzyme catalyses UDP-N-acetyl-alpha-D-muramate + NADP(+) = UDP-N-acetyl-3-O-(1-carboxyvinyl)-alpha-D-glucosamine + NADPH + H(+). Its pathway is cell wall biogenesis; peptidoglycan biosynthesis. Its function is as follows. Cell wall formation. This Erythrobacter litoralis (strain HTCC2594) protein is UDP-N-acetylenolpyruvoylglucosamine reductase.